The primary structure comprises 155 residues: MANTSSTTSDIVVRARVLIADDEGTLLEFEAENEHCLMRGAHEVRVIASPELDALHNGPYNEIALGDYTFHFNLVAANRFGAQVMLFAKRDDIKVSGAVFRLKVWNSKKRAVAPPHHEPEPVPAEEGAVADRAEPESGDAPPSPKKQKLDEREQD.

Residues 109 to 155 are disordered; the sequence is KRAVAPPHHEPEPVPAEEGAVADRAEPESGDAPPSPKKQKLDEREQD.

This is Telokin-like protein 20 homolog from Orgyia pseudotsugata multicapsid polyhedrosis virus (OpMNPV).